Consider the following 345-residue polypeptide: Beta-2-glycoprotein 1 (345 aa).

The N-terminal stretch at 1 to 19 (MISLGLILFSSVLCHVATA) is a signal peptide. 4 consecutive Sushi domains span residues 21–81 (RTCP…RCIP), 82–139 (RVCP…VCTR), 140–202 (VTCP…ECRE), and 203–262 (VKCP…SCKA). Cystine bridges form between Cys-23/Cys-66, Cys-51/Cys-79, Cys-84/Cys-124, Cys-110/Cys-137, Cys-142/Cys-188, Cys-174/Cys-200, Cys-205/Cys-248, Cys-234/Cys-260, Cys-264/Cys-315, Cys-300/Cys-325, and Cys-307/Cys-345. Residue Thr-33 is glycosylated (O-linked (GalNAc...) threonine). Residues Asn-117, Asn-162, Asn-183, and Asn-193 are each glycosylated (N-linked (GlcNAc...) asparagine). Asn-253 is a glycosylation site (N-linked (GlcNAc...) asparagine). Residues 263–345 (SCKLSVKKAT…KTDASDVKPC (83 aa)) are sushi-like.

In terms of tissue distribution, expressed by the liver and secreted in plasma.

Its subcellular location is the secreted. Functionally, binds to various kinds of negatively charged substances such as heparin, phospholipids, and dextran sulfate. May prevent activation of the intrinsic blood coagulation cascade by binding to phospholipids on the surface of damaged cells. The protein is Beta-2-glycoprotein 1 (APOH) of Canis lupus familiaris (Dog).